A 286-amino-acid chain; its full sequence is Homoserine kinase (286 aa).

ATP is bound at residue 78-88 (PLARGLGSSSS).

Belongs to the GHMP kinase family. Homoserine kinase subfamily.

The protein resides in the cytoplasm. It catalyses the reaction L-homoserine + ATP = O-phospho-L-homoserine + ADP + H(+). It participates in amino-acid biosynthesis; L-threonine biosynthesis; L-threonine from L-aspartate: step 4/5. Catalyzes the ATP-dependent phosphorylation of L-homoserine to L-homoserine phosphate. The polypeptide is Homoserine kinase (Streptococcus thermophilus (strain CNRZ 1066)).